A 336-amino-acid polypeptide reads, in one-letter code: Protein RecA (336 aa).

An ATP-binding site is contributed by 66-73; sequence GNESSGKT.

The protein belongs to the RecA family.

The protein localises to the cytoplasm. Can catalyze the hydrolysis of ATP in the presence of single-stranded DNA, the ATP-dependent uptake of single-stranded DNA by duplex DNA, and the ATP-dependent hybridization of homologous single-stranded DNAs. It interacts with LexA causing its activation and leading to its autocatalytic cleavage. This is Protein RecA from Mycoplasma pneumoniae (strain ATCC 29342 / M129 / Subtype 1) (Mycoplasmoides pneumoniae).